Consider the following 362-residue polypeptide: Prostaglandin F2-alpha receptor (362 aa).

The Extracellular segment spans residues 1–31 (MSTNSSIQPVSPESELLSNTTCQLEEDLSIS). Residues asparagine 4 and asparagine 19 are each glycosylated (N-linked (GlcNAc...) asparagine). A helical transmembrane segment spans residues 32–54 (FSIIFMTVGILSNSLAIAILMKA). Over 55 to 69 (YQRFRQKYKSSFLLL) the chain is Cytoplasmic. A helical membrane pass occupies residues 70–90 (ASALVITDFFGHLINGTIAVF). Over 91 to 109 (VYASDKDWIYFDKSNILCS) the chain is Extracellular. The cysteines at positions 108 and 186 are disulfide-linked. The chain crosses the membrane as a helical span at residues 110 to 131 (IFGICMVFSGLCPLFLGSLMAI). At 132–152 (ERCIGVTKPIFHSTKITTKHV) the chain is on the cytoplasmic side. The chain crosses the membrane as a helical span at residues 153–175 (KMMLSGVCFFAVFVALLPILGHR). Residues 176-198 (DYKIQASRTWCFYKTDEIKDWED) lie on the Extracellular side of the membrane. Residues 199–224 (RFYLLLFAFLGLLALGISFVCNAITG) form a helical membrane-spanning segment. Residues 225-250 (ISLLKVKFRSQQHRQGRSHHFEMVIQ) lie on the Cytoplasmic side of the membrane. Residues 251–267 (LLGIMCVSCICWSPFLV) traverse the membrane as a helical segment. At 268 to 285 (TMASIGMNIQDFKDSCER) the chain is on the extracellular side. Residues 286 to 307 (TLFTLRMATWNQILDPWVYILL) traverse the membrane as a helical segment. The Cytoplasmic portion of the chain corresponds to 308 to 362 (RKAVLRNLYVCTRRCCGVHVISLHVWELSSIKDSLKVAAISDLPVTEKVTQQTST).

It belongs to the G-protein coupled receptor 1 family.

It is found in the cell membrane. Functionally, receptor for prostaglandin F2-alpha (PGF2-alpha). The activity of this receptor is mediated by G proteins which activate a phosphatidylinositol-calcium second messenger system. Initiates luteolysis in the corpus luteum. The sequence is that of Prostaglandin F2-alpha receptor (PTGFR) from Bos taurus (Bovine).